A 149-amino-acid chain; its full sequence is Transcriptional repressor NrdR (149 aa).

A zinc finger spans residues 3–34 (CPFCGNRDTNVRDSRSVNEGTFIKRRRFCGEC). The ATP-cone domain maps to 49 to 139 (IKVIKKNGSC…VYMNFENEKD (91 aa)).

It belongs to the NrdR family. Requires Zn(2+) as cofactor.

In terms of biological role, negatively regulates transcription of bacterial ribonucleotide reductase nrd genes and operons by binding to NrdR-boxes. The protein is Transcriptional repressor NrdR of Neorickettsia sennetsu (strain ATCC VR-367 / Miyayama) (Ehrlichia sennetsu).